The chain runs to 55 residues: Protein SOX-19 (55 aa).

The HMG box DNA-binding region spans 1–55 (MVWSQIERRKIMEQWPDMHNAEISKRLGKRWKLLPDYEKIPFIKEAERLRLKHMA).

It is found in the nucleus. This is Protein SOX-19 (Sox19) from Mus musculus (Mouse).